Reading from the N-terminus, the 175-residue chain is NADH-quinone oxidoreductase subunit I 1 (175 aa).

4Fe-4S ferredoxin-type domains follow at residues 44 to 74 and 90 to 119; these read LNRWPDGLEKCIGCELCAWACPADAIFVESA and RVYQINYLRCIGCGFCIEACPTRALTMIND. Residues Cys54, Cys57, Cys60, Cys64, Cys99, Cys102, Cys105, and Cys109 each contribute to the [4Fe-4S] cluster site.

The protein belongs to the complex I 23 kDa subunit family. As to quaternary structure, NDH-1 is composed of 14 different subunits. Subunits NuoA, H, J, K, L, M, N constitute the membrane sector of the complex. [4Fe-4S] cluster is required as a cofactor.

It localises to the cell membrane. It carries out the reaction a quinone + NADH + 5 H(+)(in) = a quinol + NAD(+) + 4 H(+)(out). Its function is as follows. NDH-1 shuttles electrons from NADH, via FMN and iron-sulfur (Fe-S) centers, to quinones in the respiratory chain. The immediate electron acceptor for the enzyme in this species is believed to be menaquinone. Couples the redox reaction to proton translocation (for every two electrons transferred, four hydrogen ions are translocated across the cytoplasmic membrane), and thus conserves the redox energy in a proton gradient. In Mycolicibacterium paratuberculosis (strain ATCC BAA-968 / K-10) (Mycobacterium paratuberculosis), this protein is NADH-quinone oxidoreductase subunit I 1.